A 197-amino-acid chain; its full sequence is Probable chorismate pyruvate-lyase (197 aa).

Arg66, Leu104, and Glu169 together coordinate substrate.

It belongs to the UbiC family.

Its subcellular location is the cytoplasm. The catalysed reaction is chorismate = 4-hydroxybenzoate + pyruvate. The protein operates within cofactor biosynthesis; ubiquinone biosynthesis. Its function is as follows. Removes the pyruvyl group from chorismate, with concomitant aromatization of the ring, to provide 4-hydroxybenzoate (4HB) for the ubiquinone pathway. This chain is Probable chorismate pyruvate-lyase, found in Albidiferax ferrireducens (strain ATCC BAA-621 / DSM 15236 / T118) (Rhodoferax ferrireducens).